A 303-amino-acid chain; its full sequence is 4-diphosphocytidyl-2-C-methyl-D-erythritol kinase (303 aa).

Residue lysine 24 is part of the active site. Position 111 to 121 (111 to 121 (PIASGIGGGSA)) interacts with ATP. Aspartate 153 is an active-site residue.

This sequence belongs to the GHMP kinase family. IspE subfamily.

The catalysed reaction is 4-CDP-2-C-methyl-D-erythritol + ATP = 4-CDP-2-C-methyl-D-erythritol 2-phosphate + ADP + H(+). It functions in the pathway isoprenoid biosynthesis; isopentenyl diphosphate biosynthesis via DXP pathway; isopentenyl diphosphate from 1-deoxy-D-xylulose 5-phosphate: step 3/6. Catalyzes the phosphorylation of the position 2 hydroxy group of 4-diphosphocytidyl-2C-methyl-D-erythritol. The protein is 4-diphosphocytidyl-2-C-methyl-D-erythritol kinase of Rhizobium johnstonii (strain DSM 114642 / LMG 32736 / 3841) (Rhizobium leguminosarum bv. viciae).